The following is a 285-amino-acid chain: 2-dehydro-3-deoxyphosphooctonate aldolase (285 aa).

The protein belongs to the KdsA family.

The protein resides in the cytoplasm. The enzyme catalyses D-arabinose 5-phosphate + phosphoenolpyruvate + H2O = 3-deoxy-alpha-D-manno-2-octulosonate-8-phosphate + phosphate. It participates in carbohydrate biosynthesis; 3-deoxy-D-manno-octulosonate biosynthesis; 3-deoxy-D-manno-octulosonate from D-ribulose 5-phosphate: step 2/3. The protein operates within bacterial outer membrane biogenesis; lipopolysaccharide biosynthesis. In Polaromonas sp. (strain JS666 / ATCC BAA-500), this protein is 2-dehydro-3-deoxyphosphooctonate aldolase.